The primary structure comprises 156 residues: ATP synthase subunit b (156 aa).

The chain crosses the membrane as a helical span at residues 7-29; the sequence is LIGQSITFIFFVWFSMKFVWPPI.

It belongs to the ATPase B chain family. As to quaternary structure, F-type ATPases have 2 components, F(1) - the catalytic core - and F(0) - the membrane proton channel. F(1) has five subunits: alpha(3), beta(3), gamma(1), delta(1), epsilon(1). F(0) has three main subunits: a(1), b(2) and c(10-14). The alpha and beta chains form an alternating ring which encloses part of the gamma chain. F(1) is attached to F(0) by a central stalk formed by the gamma and epsilon chains, while a peripheral stalk is formed by the delta and b chains.

It is found in the cell inner membrane. Its function is as follows. F(1)F(0) ATP synthase produces ATP from ADP in the presence of a proton or sodium gradient. F-type ATPases consist of two structural domains, F(1) containing the extramembraneous catalytic core and F(0) containing the membrane proton channel, linked together by a central stalk and a peripheral stalk. During catalysis, ATP synthesis in the catalytic domain of F(1) is coupled via a rotary mechanism of the central stalk subunits to proton translocation. In terms of biological role, component of the F(0) channel, it forms part of the peripheral stalk, linking F(1) to F(0). This chain is ATP synthase subunit b, found in Thiobacillus denitrificans (strain ATCC 25259 / T1).